A 90-amino-acid polypeptide reads, in one-letter code: uncharacterized protein (90 aa).

2 consecutive transmembrane segments (helical) span residues 17-37 and 55-75; these read ILSM…IYLV and ICFG…WGIA.

The protein localises to the membrane. This is an uncharacterized protein from Schizosaccharomyces pombe (strain 972 / ATCC 24843) (Fission yeast).